A 1781-amino-acid polypeptide reads, in one-letter code: BCL-6 corepressor-like protein 1 (1781 aa).

Disordered regions lie at residues 64-136 (AVGS…SHSR) and 337-362 (ASTPPAAPAPPSVPMPTPTPSSGPPS). Composition is skewed to polar residues over residues 66–82 (GSGSNARGTNPDGNTTE) and 127–136 (PDSTEASHSR). Position 490 is a phosphoserine (S490). Positions 521 to 531 (SCTSPSSSTNS) are enriched in low complexity. Disordered regions lie at residues 521-545 (SCTSPSSSTNSQPAPDGVPGPLADT), 561-616 (LLPA…EMPL), 733-777 (NRDP…STVK), 869-895 (PLGSSETVHGLPEGQPRPGGPFAPEQD), and 933-960 (QPSSGDMGVNQGSEESESHLCSDSTPKM). Residues 581–594 (TDQQTEGTSVTFSP) are compositionally biased toward polar residues. Phosphoserine is present on residues S593 and S607. A Glycyl lysine isopeptide (Lys-Gly) (interchain with G-Cter in SUMO2) cross-link involves residue K741. Phosphoserine is present on S1024. Residue K1087 forms a Glycyl lysine isopeptide (Lys-Gly) (interchain with G-Cter in SUMO2) linkage. A disordered region spans residues 1100-1484 (WQPDEETESL…PTARQIPPEA (385 aa)). A compositionally biased stretch (basic and acidic residues) spans 1116–1127 (CNKEKEIEEEPR). Phosphoserine is present on S1162. Over residues 1176–1185 (VRGKHKHRKP) the composition is skewed to basic residues. Over residues 1195 to 1213 (KRTDGHEEGSLEKKAKNSF) the composition is skewed to basic and acidic residues. Residues 1222–1234 (STRTRSQSGSICS) are compositionally biased toward polar residues. 2 stretches are compositionally biased toward basic and acidic residues: residues 1271–1284 (TQRDTQYRSHHAQD) and 1297–1307 (RAREMPWRTEA). Over residues 1314 to 1324 (TNEEEEDDEEE) the composition is skewed to acidic residues. Positions 1328-1339 (KRKKRRRQKSRK) are enriched in basic residues. Residues 1350 to 1362 (EEQRRKGRADSKA) show a composition bias toward basic and acidic residues. 2 stretches are compositionally biased toward polar residues: residues 1381–1394 (LLLSSKAQGISDSP) and 1437–1449 (RWSQQKTRSSKSP). ANK repeat units lie at residues 1493-1523 (AGETLLQRAARLGYKDVVLYCLQKHSEDVNH), 1527-1556 (AGYTALHEACSRGWTDILNILLQHGANVNC), and 1560-1589 (DGTRPVHDAVVNDNLETIWLLLSYGADPTL). Residues 1664–1781 (DDFMFELSDK…SEVEYQSWSS (118 aa)) form a PCGF Ub-like fold domain (PUFD); required for the interaction with the KDM2B-SKP1 heterodimeric complex region.

It belongs to the BCOR family. Interacts with PCGF1, forming heterodimers. The PCGF1-BCORL1 heterodimeric complex interacts with the KDM2B-SKP1 heterodimeric complex to form a homotetrameric polycomb repression complex 1 (PRC1.1). Interacts with SKP1. Interacts with CTBP1, HDAC4, HDAC5 and HDAC7. As to expression, highly expressed in lung and testis.

It localises to the nucleus. In terms of biological role, transcriptional corepressor. May specifically inhibit gene expression when recruited to promoter regions by sequence specific DNA-binding proteins such as BCL6. This repression may be mediated at least in part by histone deacetylase activities which can associate with this corepressor. The polypeptide is BCL-6 corepressor-like protein 1 (Bcorl1) (Mus musculus (Mouse)).